We begin with the raw amino-acid sequence, 768 residues long: P-selectin (768 aa).

A signal peptide spans 1-41 (MAGCPKGSWKPRLRSVVLGAAQLIWLSALISELVNRKKVAT). Topologically, residues 42-709 (WTYNYSTKAY…QAGTLTIQEA (668 aa)) are extracellular. N-linked (GlcNAc...) asparagine glycosylation is found at N45, N54, and N107. The C-type lectin domain occupies 58 to 158 (AFCKRHFTDL…PCFKRKRALC (101 aa)). Disulfide bonds link C60–C158, C131–C150, C168–C183, C185–C194, C200–C244, C230–C257, C262–C306, C292–C319, C324–C368, C354–C381, C386–C430, C416–C443, C448–C492, C478–C505, C510–C554, C540–C567, C580–C624, C610–C637, C642–C686, and C672–C699. Ca(2+) contacts are provided by E121, N123, and N124. N123 contributes to the a carbohydrate binding site. A carbohydrate-binding residues include E133 and N146. Ca(2+) contacts are provided by N146 and D147. Residues 159–195 (YTASCQDMSCNSQGERIETIGSYTCSCYPGFYGPECE) form the EGF-like domain. Sushi domains follow at residues 198–259 (QECG…QCKA), 260–321 (VQCQ…TCEA), 322–383 (IACE…VCEA), 384–445 (LQCQ…ECQA), 446–507 (VSCT…MCEA), 508–569 (IKCP…TCKG), 578–639 (VRCP…VCRA), and 640–701 (VKCS…TCQA). A glycan (N-linked (GlcNAc...) asparagine) is linked at N212. An N-linked (GlcNAc...) asparagine glycan is attached at N347. Residue N456 is glycosylated (N-linked (GlcNAc...) asparagine). N603 is a glycosylation site (N-linked (GlcNAc...) asparagine). N654, N661, and N679 each carry an N-linked (GlcNAc...) asparagine glycan. Residues 710-733 (LTYLGGALASTSGLAVGGTLLALL) form a helical membrane-spanning segment. Topologically, residues 734–768 (RKRLRKKDDGKCPLNPHSHLGTYGVFTNAAYDPTP) are cytoplasmic. C745 carries S-palmitoyl cysteine; alternate lipidation. C745 is lipidated: S-stearoyl cysteine; alternate. Positions 756–759 (YGVF) match the Endocytosis signal motif. The interval 759-768 (FTNAAYDPTP) is interaction with SNX17.

This sequence belongs to the selectin/LECAM family. Interacts with SNX17. Interacts with SELPLG/PSGL1 and PODXL2 and mediates neutrophil adhesion and leukocyte rolling. This interaction requires the sialyl-Lewis X epitope of SELPLG and PODXL2, and specific tyrosine sulfation on SELPLG. Interacts (via C-type lectin domain) with alpha-IIb/beta3 integrin ITGA2B:ITGB3 and alpha-V/beta-3 integrin ITGAV:ITGB3. Interacts with alpha5/beta1 integrin ITGA5:ITGB1 and alpha4/beta1 integrin ITGA4:ITGB. In terms of tissue distribution, not detected in the absence of exposure to lipopolysaccharide (LPS). Detected only after exposure to lipopolysaccharide (LPS) in the tissues examined: spleen, lung, brain, liver, heart, kidney, thymus and small intestine.

It localises to the cell membrane. Ca(2+)-dependent receptor for myeloid cells that binds to carbohydrates on neutrophils and monocytes. Mediates the interaction of activated endothelial cells or platelets with leukocytes. The ligand recognized is sialyl-Lewis X. Mediates rapid rolling of leukocyte rolling over vascular surfaces during the initial steps in inflammation through interaction with SELPLG. Mediates cell-cell interactions and cell adhesion via the interaction with integrin alpha-IIb/beta3 (ITGA2B:ITGB3) and integrin alpha-V/beta-3 (ITGAV:ITGB3). In Rattus norvegicus (Rat), this protein is P-selectin (Selp).